The chain runs to 456 residues: O-phospho-L-seryl-tRNA:Cys-tRNA synthase 2 (456 aa).

Residues 146–147 (AR), asparagine 251, and 274–276 (SGH) contribute to the pyridoxal 5'-phosphate site. Lysine 277 bears the N6-(pyridoxal phosphate)lysine mark.

The protein belongs to the SepCysS family. Homodimer. Interacts with SepRS. Pyridoxal 5'-phosphate is required as a cofactor.

It catalyses the reaction O-phospho-L-seryl-tRNA(Cys) + hydrogen sulfide + H(+) = L-cysteinyl-tRNA(Cys) + phosphate. Functionally, converts O-phospho-L-seryl-tRNA(Cys) (Sep-tRNA(Cys)) to L-cysteinyl-tRNA(Cys) (Cys-tRNA(Cys)). In Methanospirillum hungatei JF-1 (strain ATCC 27890 / DSM 864 / NBRC 100397 / JF-1), this protein is O-phospho-L-seryl-tRNA:Cys-tRNA synthase 2.